The sequence spans 894 residues: Cell wall-associated protease (894 aa).

The first 31 residues, 1-31, serve as a signal peptide directing secretion; sequence MKRRKFSSVVAAVLIFALIFSLFSPGTKAAA. Residues 422 to 729 enclose the Peptidase S8 domain; that stretch reads QWPLKNNGEN…YGRLNVMKAV (308 aa). Catalysis depends on charge relay system residues D462, H497, and S650.

Belongs to the peptidase S8 family. Post-translationally, proteolytically cleaved to yield CWBP23 and CWBP52.

It is found in the secreted. Its subcellular location is the cell wall. Its activity is regulated as follows. Inhibited by PMSF. Functionally, CWBP52 is a serine-type protease that could be involved in proteoglycan peptide bridges. This chain is Cell wall-associated protease (wprA), found in Bacillus subtilis (strain 168).